Consider the following 378-residue polypeptide: UDP-N-acetylenolpyruvoylglucosamine reductase (378 aa).

One can recognise an FAD-binding PCMH-type domain in the interval 15 to 185; sequence VGGTPERLLE…LSVDLELADH (171 aa). The active site involves R163. S248 functions as the Proton donor in the catalytic mechanism. Residue E370 is part of the active site.

It belongs to the MurB family. Requires FAD as cofactor.

It is found in the cytoplasm. The catalysed reaction is UDP-N-acetyl-alpha-D-muramate + NADP(+) = UDP-N-acetyl-3-O-(1-carboxyvinyl)-alpha-D-glucosamine + NADPH + H(+). The protein operates within cell wall biogenesis; peptidoglycan biosynthesis. In terms of biological role, cell wall formation. This is UDP-N-acetylenolpyruvoylglucosamine reductase from Leifsonia xyli subsp. xyli (strain CTCB07).